The chain runs to 67 residues: UPF0435 protein SSP0913 (67 aa).

The protein belongs to the UPF0435 family.

This is UPF0435 protein SSP0913 from Staphylococcus saprophyticus subsp. saprophyticus (strain ATCC 15305 / DSM 20229 / NCIMB 8711 / NCTC 7292 / S-41).